The following is a 315-amino-acid chain: Methionyl-tRNA formyltransferase (315 aa).

113 to 116 contributes to the (6S)-5,6,7,8-tetrahydrofolate binding site; that stretch reads SLLP.

The protein belongs to the Fmt family.

The enzyme catalyses L-methionyl-tRNA(fMet) + (6R)-10-formyltetrahydrofolate = N-formyl-L-methionyl-tRNA(fMet) + (6S)-5,6,7,8-tetrahydrofolate + H(+). Functionally, attaches a formyl group to the free amino group of methionyl-tRNA(fMet). The formyl group appears to play a dual role in the initiator identity of N-formylmethionyl-tRNA by promoting its recognition by IF2 and preventing the misappropriation of this tRNA by the elongation apparatus. This chain is Methionyl-tRNA formyltransferase, found in Escherichia coli O127:H6 (strain E2348/69 / EPEC).